A 488-amino-acid chain; its full sequence is Putative BTB/POZ domain-containing protein L674 (488 aa).

The BTB domain maps to 83 to 150 (NIVYFNIGGK…VKNQKCPINN (68 aa)).

It belongs to the mimivirus BTB/WD family.

This chain is Putative BTB/POZ domain-containing protein L674, found in Acanthamoeba polyphaga (Amoeba).